A 136-amino-acid chain; its full sequence is Large ribosomal subunit protein eL27B (136 aa).

This sequence belongs to the eukaryotic ribosomal protein eL27 family. In terms of assembly, component of the large ribosomal subunit (LSU). Mature yeast ribosomes consist of a small (40S) and a large (60S) subunit. The 40S small subunit contains 1 molecule of ribosomal RNA (18S rRNA) and at least 33 different proteins. The large 60S subunit contains 3 rRNA molecules (25S, 5.8S and 5S rRNA) and at least 46 different proteins.

Its subcellular location is the cytoplasm. Functionally, component of the ribosome, a large ribonucleoprotein complex responsible for the synthesis of proteins in the cell. The small ribosomal subunit (SSU) binds messenger RNAs (mRNAs) and translates the encoded message by selecting cognate aminoacyl-transfer RNA (tRNA) molecules. The large subunit (LSU) contains the ribosomal catalytic site termed the peptidyl transferase center (PTC), which catalyzes the formation of peptide bonds, thereby polymerizing the amino acids delivered by tRNAs into a polypeptide chain. The nascent polypeptides leave the ribosome through a tunnel in the LSU and interact with protein factors that function in enzymatic processing, targeting, and the membrane insertion of nascent chains at the exit of the ribosomal tunnel. The sequence is that of Large ribosomal subunit protein eL27B (rpl2702) from Schizosaccharomyces pombe (strain 972 / ATCC 24843) (Fission yeast).